A 505-amino-acid polypeptide reads, in one-letter code: Cytochrome c oxidase subunit 1 (505 aa).

A helical membrane pass occupies residues 14 to 34; it reads LLYLVFAFFGGLLGTSLSMLI. Residues glutamate 37 and glycine 42 each coordinate Ca(2+). A run of 6 helical transmembrane segments spans residues 55-75, 98-118, 143-163, 180-200, 229-249, and 261-281; these read VIITGHGIIMLLFMVMPALFG, NISFWLNPPALALLLLSTLVE, AILSLHLNGLSSILGAVNMLV, LFVWAIALTAVLVILAVPVLA, LFWFFGHPEVYILILPAFGIV, and VFGLTGMICAMGAISLLGFIV. Fe(II)-heme a is bound at residue histidine 60. Residues histidine 235 and tyrosine 239 each contribute to the Cu cation site. Residues 235–239 constitute a cross-link (1'-histidyl-3'-tyrosine (His-Tyr)); that stretch reads HPEVY. Residue tyrosine 239 participates in O2 binding. The Cu cation site is built by histidine 284 and histidine 285. 2 consecutive transmembrane segments (helical) span residues 302 to 322 and 332 to 352; these read ATMIIAVPTGMKIFSWMATIY and MWFAVGFICLFTLGGVTGVVL. The Mg(2+) site is built by histidine 362 and aspartate 363. Histidine 370 contacts heme a3. Residue histidine 372 participates in Fe(II)-heme a binding. 3 helical membrane-spanning segments follow: residues 374-394, 408-428, and 446-466; these read VLSMGAVFGIFAGVYFWGNLI, FWLLFIGVNLTFFPQHFLGLA, and AVSSFGASISFISVIVFATTF.

Belongs to the heme-copper respiratory oxidase family. Component of the cytochrome c oxidase (complex IV, CIV), a multisubunit enzyme composed of a catalytic core of 3 subunits and several supernumerary subunits. The complex exists as a monomer or a dimer and forms supercomplexes (SCs) in the inner mitochondrial membrane with ubiquinol-cytochrome c oxidoreductase (cytochrome b-c1 complex, complex III, CIII). Heme is required as a cofactor. It depends on Cu cation as a cofactor.

It localises to the mitochondrion inner membrane. The catalysed reaction is 4 Fe(II)-[cytochrome c] + O2 + 8 H(+)(in) = 4 Fe(III)-[cytochrome c] + 2 H2O + 4 H(+)(out). It participates in energy metabolism; oxidative phosphorylation. In terms of biological role, component of the cytochrome c oxidase, the last enzyme in the mitochondrial electron transport chain which drives oxidative phosphorylation. The respiratory chain contains 3 multisubunit complexes succinate dehydrogenase (complex II, CII), ubiquinol-cytochrome c oxidoreductase (cytochrome b-c1 complex, complex III, CIII) and cytochrome c oxidase (complex IV, CIV), that cooperate to transfer electrons derived from NADH and succinate to molecular oxygen, creating an electrochemical gradient over the inner membrane that drives transmembrane transport and the ATP synthase. Cytochrome c oxidase is the component of the respiratory chain that catalyzes the reduction of oxygen to water. Electrons originating from reduced cytochrome c in the intermembrane space (IMS) are transferred via the dinuclear copper A center (CU(A)) of subunit 2 and heme A of subunit 1 to the active site in subunit 1, a binuclear center (BNC) formed by heme A3 and copper B (CU(B)). The BNC reduces molecular oxygen to 2 water molecules using 4 electrons from cytochrome c in the IMS and 4 protons from the mitochondrial matrix. The protein is Cytochrome c oxidase subunit 1 (COX1) of Chlamydomonas reinhardtii (Chlamydomonas smithii).